We begin with the raw amino-acid sequence, 255 residues long: Small ribosomal subunit protein uS2 (255 aa).

Residues 230–255 (QSSSGRDLGASSEVPVEPALEEAAEG) form a disordered region.

Belongs to the universal ribosomal protein uS2 family.

The chain is Small ribosomal subunit protein uS2 from Rhizobium leguminosarum bv. trifolii (strain WSM2304).